The primary structure comprises 157 residues: SsrA-binding protein (157 aa).

A disordered region spans residues 134–157 (HDKRESEKKRDWGREKGRLLRARG). The segment covering 135–151 (DKRESEKKRDWGREKGR) has biased composition (basic and acidic residues).

This sequence belongs to the SmpB family.

Its subcellular location is the cytoplasm. In terms of biological role, required for rescue of stalled ribosomes mediated by trans-translation. Binds to transfer-messenger RNA (tmRNA), required for stable association of tmRNA with ribosomes. tmRNA and SmpB together mimic tRNA shape, replacing the anticodon stem-loop with SmpB. tmRNA is encoded by the ssrA gene; the 2 termini fold to resemble tRNA(Ala) and it encodes a 'tag peptide', a short internal open reading frame. During trans-translation Ala-aminoacylated tmRNA acts like a tRNA, entering the A-site of stalled ribosomes, displacing the stalled mRNA. The ribosome then switches to translate the ORF on the tmRNA; the nascent peptide is terminated with the 'tag peptide' encoded by the tmRNA and targeted for degradation. The ribosome is freed to recommence translation, which seems to be the essential function of trans-translation. This chain is SsrA-binding protein, found in Nitrobacter hamburgensis (strain DSM 10229 / NCIMB 13809 / X14).